The following is a 378-amino-acid chain: Cytochrome b (378 aa).

4 helical membrane passes run 34-54, 78-99, 114-134, and 179-199; these read FGSLLFLCLMIQILTGLFLAM, WLLRTMHANGASFFFICIYLHV, WLVGVIILFLVMGTAFMGYVL, and FFTFHFILPFIVLAATLIHIL. The heme b site is built by His84 and His98. Heme b-binding residues include His183 and His197. Residue His202 coordinates a ubiquinone. 4 consecutive transmembrane segments (helical) span residues 227–247, 289–309, 321–341, and 348–368; these read FKDIVGFIMMTMILILLVLIN, LGGVIALVLSIAILAILPFYH, INQILFWIMVVTVILLTWIGA, and YVLVGQILTVIYFSYFMFNPL.

The protein belongs to the cytochrome b family. In terms of assembly, the main subunits of complex b-c1 are: cytochrome b, cytochrome c1 and the Rieske protein. The cofactor is heme b.

The protein localises to the mitochondrion inner membrane. Component of the ubiquinol-cytochrome c reductase complex (complex III or cytochrome b-c1 complex) that is part of the mitochondrial respiratory chain. The b-c1 complex mediates electron transfer from ubiquinol to cytochrome c. Contributes to the generation of a proton gradient across the mitochondrial membrane that is then used for ATP synthesis. The chain is Cytochrome b (MT-CYB) from Cochliomyia hominivorax (Primary screw-worm).